The chain runs to 525 residues: GMP synthase [glutamine-hydrolyzing] (525 aa).

The 201-residue stretch at 7-207 folds into the Glutamine amidotransferase type-1 domain; that stretch reads RILVIDFGSQ…ITCICRCKSS (201 aa). The active-site Nucleophile is the Cys-84. Residues His-181 and Glu-183 contribute to the active site. Residues 208 to 400 enclose the GMPS ATP-PPase domain; that stretch reads WKIANIIDDI…LGIPYDIAYR (193 aa). 235–241 is a binding site for ATP; it reads SGGIDSL.

In terms of assembly, homodimer.

It carries out the reaction XMP + L-glutamine + ATP + H2O = GMP + L-glutamate + AMP + diphosphate + 2 H(+). The protein operates within purine metabolism; GMP biosynthesis; GMP from XMP (L-Gln route): step 1/1. In terms of biological role, catalyzes the synthesis of GMP from XMP. The polypeptide is GMP synthase [glutamine-hydrolyzing] (Blochmanniella pennsylvanica (strain BPEN)).